We begin with the raw amino-acid sequence, 296 residues long: Formamidopyrimidine-DNA glycosylase (296 aa).

Proline 2 serves as the catalytic Schiff-base intermediate with DNA. Catalysis depends on glutamate 3, which acts as the Proton donor. The active-site Proton donor; for beta-elimination activity is lysine 58. DNA-binding residues include histidine 104, arginine 126, and lysine 169. An FPG-type zinc finger spans residues 260–296; it reads SVYDRAGEACRKPGCDGTVTRIVQAGRSTFHCPRCQK. Arginine 286 functions as the Proton donor; for delta-elimination activity in the catalytic mechanism.

Belongs to the FPG family. In terms of assembly, monomer. Zn(2+) is required as a cofactor.

It catalyses the reaction Hydrolysis of DNA containing ring-opened 7-methylguanine residues, releasing 2,6-diamino-4-hydroxy-5-(N-methyl)formamidopyrimidine.. The catalysed reaction is 2'-deoxyribonucleotide-(2'-deoxyribose 5'-phosphate)-2'-deoxyribonucleotide-DNA = a 3'-end 2'-deoxyribonucleotide-(2,3-dehydro-2,3-deoxyribose 5'-phosphate)-DNA + a 5'-end 5'-phospho-2'-deoxyribonucleoside-DNA + H(+). Functionally, involved in base excision repair of DNA damaged by oxidation or by mutagenic agents. Acts as a DNA glycosylase that recognizes and removes damaged bases. Has a preference for oxidized purines, such as 7,8-dihydro-8-oxoguanine (8-oxoG). Has AP (apurinic/apyrimidinic) lyase activity and introduces nicks in the DNA strand. Cleaves the DNA backbone by beta-delta elimination to generate a single-strand break at the site of the removed base with both 3'- and 5'-phosphates. The protein is Formamidopyrimidine-DNA glycosylase of Sinorhizobium fredii (strain NBRC 101917 / NGR234).